The following is a 185-amino-acid chain: Large ribosomal subunit protein uL5 (185 aa).

Belongs to the universal ribosomal protein uL5 family. As to quaternary structure, part of the 50S ribosomal subunit; part of the 5S rRNA/L5/L18/L25 subcomplex. Contacts the 5S rRNA and the P site tRNA. Forms a bridge to the 30S subunit in the 70S ribosome.

In terms of biological role, this is one of the proteins that bind and probably mediate the attachment of the 5S RNA into the large ribosomal subunit, where it forms part of the central protuberance. In the 70S ribosome it contacts protein S13 of the 30S subunit (bridge B1b), connecting the 2 subunits; this bridge is implicated in subunit movement. Contacts the P site tRNA; the 5S rRNA and some of its associated proteins might help stabilize positioning of ribosome-bound tRNAs. The chain is Large ribosomal subunit protein uL5 from Brucella abortus (strain S19).